A 469-amino-acid polypeptide reads, in one-letter code: Ribulose bisphosphate carboxylase large chain (469 aa).

Lysine 8 is subject to N6,N6,N6-trimethyllysine. Substrate-binding residues include asparagine 117 and threonine 167. Lysine 169 serves as the catalytic Proton acceptor. Lysine 171 is a substrate binding site. Positions 195, 197, and 198 each coordinate Mg(2+). An N6-carboxylysine modification is found at lysine 195. The active-site Proton acceptor is histidine 288. Substrate-binding residues include arginine 289, histidine 321, and serine 373.

It belongs to the RuBisCO large chain family. Type I subfamily. In terms of assembly, heterohexadecamer of 8 large chains and 8 small chains; disulfide-linked. The disulfide link is formed within the large subunit homodimers. The cofactor is Mg(2+). The disulfide bond which can form in the large chain dimeric partners within the hexadecamer appears to be associated with oxidative stress and protein turnover.

The protein localises to the plastid. Its subcellular location is the chloroplast. The enzyme catalyses 2 (2R)-3-phosphoglycerate + 2 H(+) = D-ribulose 1,5-bisphosphate + CO2 + H2O. It catalyses the reaction D-ribulose 1,5-bisphosphate + O2 = 2-phosphoglycolate + (2R)-3-phosphoglycerate + 2 H(+). RuBisCO catalyzes two reactions: the carboxylation of D-ribulose 1,5-bisphosphate, the primary event in carbon dioxide fixation, as well as the oxidative fragmentation of the pentose substrate in the photorespiration process. Both reactions occur simultaneously and in competition at the same active site. The chain is Ribulose bisphosphate carboxylase large chain from Akania bidwillii (Turnipwood).